We begin with the raw amino-acid sequence, 485 residues long: Glycogen synthase (485 aa).

Lysine 20 lines the ADP-alpha-D-glucose pocket.

The protein belongs to the glycosyltransferase 1 family. Bacterial/plant glycogen synthase subfamily.

The catalysed reaction is [(1-&gt;4)-alpha-D-glucosyl](n) + ADP-alpha-D-glucose = [(1-&gt;4)-alpha-D-glucosyl](n+1) + ADP + H(+). It participates in glycan biosynthesis; glycogen biosynthesis. Functionally, synthesizes alpha-1,4-glucan chains using ADP-glucose. The chain is Glycogen synthase from Vibrio vulnificus (strain YJ016).